The sequence spans 208 residues: RNA chaperone ProQ (208 aa).

2 stretches are compositionally biased toward basic and acidic residues: residues 99–115 (AQET…EKNK) and 126–135 (PAKDKPENTA). The segment at 99 to 149 (AQETLKESKAKVAEKNKATNKAAAKKAPAKDKPENTAKAKPKTAKKPAKPK) is disordered. Residues 137–149 (AKPKTAKKPAKPK) show a composition bias toward basic residues.

It belongs to the ProQ family.

It localises to the cytoplasm. Functionally, RNA chaperone with significant RNA binding, RNA strand exchange and RNA duplexing activities. The protein is RNA chaperone ProQ of Idiomarina loihiensis (strain ATCC BAA-735 / DSM 15497 / L2-TR).